The chain runs to 140 residues: Large ribosomal subunit protein uL13 (140 aa).

It belongs to the universal ribosomal protein uL13 family. Part of the 50S ribosomal subunit.

This protein is one of the early assembly proteins of the 50S ribosomal subunit, although it is not seen to bind rRNA by itself. It is important during the early stages of 50S assembly. This chain is Large ribosomal subunit protein uL13, found in Methanosarcina mazei (strain ATCC BAA-159 / DSM 3647 / Goe1 / Go1 / JCM 11833 / OCM 88) (Methanosarcina frisia).